Here is a 174-residue protein sequence, read N- to C-terminus: Putative serine protease 46 (174 aa).

In terms of domain architecture, Peptidase S1 spans 43 to 174 (VVKGKLVEVG…IGWGTTGKKG (132 aa)). Residues cysteine 68 and cysteine 84 are joined by a disulfide bond. Catalysis depends on charge relay system residues histidine 83 and aspartate 128.

The protein belongs to the peptidase S1 family.

In Homo sapiens (Human), this protein is Putative serine protease 46.